Consider the following 120-residue polypeptide: Flagellar protein FliT (120 aa).

A required for homodimerization region spans residues 1-50 (MERHQHLLSEYQQILTLSEQMLVLATEGNWDALVDLEMTYLKAVESTANI). The fliD binding stretch occupies residues 60–98 (LQDLLREKLRAILDNEIEIKRLLQLRLDRLSDLVGQSTK).

Belongs to the FliT family. In terms of assembly, homodimer. Interacts with FliD and FlhC.

Its subcellular location is the cytoplasm. The protein localises to the cytosol. Its function is as follows. Dual-function protein that regulates the transcription of class 2 flagellar operons and that also acts as an export chaperone for the filament-capping protein FliD. As a transcriptional regulator, acts as an anti-FlhDC factor; it directly binds FlhC, thus inhibiting the binding of the FlhC/FlhD complex to class 2 promoters, resulting in decreased expression of class 2 flagellar operons. As a chaperone, effects FliD transition to the membrane by preventing its premature polymerization, and by directing it to the export apparatus. The sequence is that of Flagellar protein FliT from Yersinia enterocolitica serotype O:8 / biotype 1B (strain NCTC 13174 / 8081).